The chain runs to 1071 residues: ATP-dependent helicase/deoxyribonuclease subunit B (1071 aa).

The protein belongs to the helicase family. AddB/RexB type 2 subfamily. Heterodimer of AddA and RexB. Requires Mg(2+) as cofactor.

In terms of biological role, the heterodimer acts as both an ATP-dependent DNA helicase and an ATP-dependent, dual-direction single-stranded exonuclease. Recognizes the chi site generating a DNA molecule suitable for the initiation of homologous recombination. This subunit has 5' -&gt; 3' nuclease activity but not helicase activity. The chain is ATP-dependent helicase/deoxyribonuclease subunit B from Streptococcus pyogenes serotype M1.